A 219-amino-acid chain; its full sequence is Transmembrane protein 17A (219 aa).

Residues Asn18 and Asn27 are each glycosylated (N-linked (GlcNAc...) asparagine). Helical transmembrane passes span 56–76 (MMLYFNMFFFPFWWISELLML), 83–103 (LPVYYQCLLVTGMVLISIFEV), 121–141 (LAGFWLISFLFQLPILLFFIT), and 153–173 (AVHSLYLAFLLGELMASFLAL).

The protein belongs to the TMEM17 family. In terms of assembly, part of the tectonic-like complex (also named B9 complex).

Its subcellular location is the cell projection. It localises to the cilium membrane. Its function is as follows. Transmembrane component of the tectonic-like complex, a complex localized at the transition zone of primary cilia and acting as a barrier that prevents diffusion of transmembrane proteins between the cilia and plasma membranes. Required for ciliogenesis and sonic hedgehog/SHH signaling. The protein is Transmembrane protein 17A (tmem17a) of Danio rerio (Zebrafish).